The chain runs to 330 residues: Glucosyltransferase 3 (330 aa).

Residue Thr-16 coordinates UDP. Positions Met-106–Phe-111 are substrate protein-binding loop. Residues Arg-179, Tyr-211 to Asp-214, and Ser-244 to Ser-249 contribute to the UDP site.

It belongs to the Gtf3 glucosyltransferase family. As to quaternary structure, homotetramer; a dimer of dimers. In vitro glycosyltransferase activity is metal-independent. is required as a cofactor.

It functions in the pathway protein modification; protein glycosylation. Functionally, required for polymorphic O-glycosylation of the serine-rich repeat protein Fap1. Catalyzes the second step in glycosylation of the serine-rich repeat protein in this bacteria. Transfers glucose from UDP-glucose to the terminal GlcNAc moiety of 3-O-(N-acetyl-alpha-D-glucosaminyl)-L-seryl-[protein] which results from the first glycosylation step of Fap1; does not use other sugar nucleotides as substrates. The protein is Glucosyltransferase 3 of Streptococcus parasanguinis.